We begin with the raw amino-acid sequence, 119 residues long: Fluoride-specific ion channel FluC (119 aa).

4 consecutive transmembrane segments (helical) span residues 5-25 (ILPLSIGAIFGTTARWLLNLA), 30-50 (LSPATGNLFANWTGALLIGIF), 59-79 (WKLLLITGFFGSLTTLSGFSL), and 92-112 (SALANIFLHTAGSLLLTWLGL). Gly69 and Thr72 together coordinate Na(+).

It belongs to the fluoride channel Fluc/FEX (TC 1.A.43) family.

It is found in the cell inner membrane. The catalysed reaction is fluoride(in) = fluoride(out). Na(+) is not transported, but it plays an essential structural role and its presence is essential for fluoride channel function. Functionally, fluoride-specific ion channel. Important for reducing fluoride concentration in the cell, thus reducing its toxicity. The polypeptide is Fluoride-specific ion channel FluC (Neisseria gonorrhoeae (strain NCCP11945)).